We begin with the raw amino-acid sequence, 159 residues long: UPF0756 membrane protein PTH_1668 (159 aa).

The next 4 helical transmembrane spans lie at I15 to I37, L61 to I81, P117 to T137, and P138 to F158.

Belongs to the UPF0756 family.

It is found in the cell membrane. This chain is UPF0756 membrane protein PTH_1668, found in Pelotomaculum thermopropionicum (strain DSM 13744 / JCM 10971 / SI).